We begin with the raw amino-acid sequence, 207 residues long: Outer-membrane lipoprotein LolB (207 aa).

A signal peptide spans Met-1–Ala-21. A lipid anchor (N-palmitoyl cysteine) is attached at Cys-22. Cys-22 is lipidated: S-diacylglycerol cysteine.

Belongs to the LolB family. As to quaternary structure, monomer.

It localises to the cell outer membrane. Functionally, plays a critical role in the incorporation of lipoproteins in the outer membrane after they are released by the LolA protein. The protein is Outer-membrane lipoprotein LolB of Escherichia coli O127:H6 (strain E2348/69 / EPEC).